The chain runs to 347 residues: N-acetyl-gamma-glutamyl-phosphate reductase (347 aa).

C152 is a catalytic residue.

The protein belongs to the NAGSA dehydrogenase family. Type 1 subfamily.

The protein resides in the cytoplasm. It carries out the reaction N-acetyl-L-glutamate 5-semialdehyde + phosphate + NADP(+) = N-acetyl-L-glutamyl 5-phosphate + NADPH + H(+). It functions in the pathway amino-acid biosynthesis; L-arginine biosynthesis; N(2)-acetyl-L-ornithine from L-glutamate: step 3/4. Its function is as follows. Catalyzes the NADPH-dependent reduction of N-acetyl-5-glutamyl phosphate to yield N-acetyl-L-glutamate 5-semialdehyde. In Neisseria meningitidis serogroup A / serotype 4A (strain DSM 15465 / Z2491), this protein is N-acetyl-gamma-glutamyl-phosphate reductase.